A 181-amino-acid chain; its full sequence is Shikimate kinase 2 (181 aa).

Residue 12–17 coordinates ATP; the sequence is GCGKTT. Positions 16 and 32 each coordinate Mg(2+). Substrate is bound by residues D34, R58, and G79. The interval 112–126 is LID domain; that stretch reads EAEPEVGLRPTLTGK. An ATP-binding site is contributed by R120. R139 contributes to the substrate binding site.

This sequence belongs to the shikimate kinase family. AroL subfamily. As to quaternary structure, monomer. Mg(2+) serves as cofactor.

Its subcellular location is the cytoplasm. It catalyses the reaction shikimate + ATP = 3-phosphoshikimate + ADP + H(+). Its pathway is metabolic intermediate biosynthesis; chorismate biosynthesis; chorismate from D-erythrose 4-phosphate and phosphoenolpyruvate: step 5/7. Catalyzes the specific phosphorylation of the 3-hydroxyl group of shikimic acid using ATP as a cosubstrate. This Escherichia fergusonii (strain ATCC 35469 / DSM 13698 / CCUG 18766 / IAM 14443 / JCM 21226 / LMG 7866 / NBRC 102419 / NCTC 12128 / CDC 0568-73) protein is Shikimate kinase 2.